The sequence spans 162 residues: uncharacterized protein (162 aa).

Residues 7–27 (LGGVMLFAIVSLMVCGCMVVF) traverse the membrane as a helical segment.

It is found in the membrane. This is an uncharacterized protein from Methanocaldococcus jannaschii (strain ATCC 43067 / DSM 2661 / JAL-1 / JCM 10045 / NBRC 100440) (Methanococcus jannaschii).